The following is a 251-amino-acid chain: Extracellular superoxide dismutase [Cu-Zn] (251 aa).

Positions 1–15 (MLAFLFYGLLLAACG) are cleaved as a signal peptide. The propeptide occupies 16–24 (SVTMSNPGE). 2 cysteine pairs are disulfide-bonded: cysteine 77–cysteine 222 and cysteine 139–cysteine 221. Asparagine 121 carries N-linked (GlcNAc...) asparagine glycosylation. Cu cation-binding residues include histidine 128, histidine 130, and histidine 145. 4 residues coordinate Zn(2+): histidine 145, histidine 153, histidine 156, and aspartate 159. Histidine 195 lines the Cu cation pocket. The tract at residues 230-251 (AAWESQTKERKKRRRESECKTT) is disordered.

This sequence belongs to the Cu-Zn superoxide dismutase family. Homotetramer. Directly interacts with ATP7A/MNK; this interaction is copper-dependent and is required for SOD3 activity. Cu cation serves as cofactor. The cofactor is Zn(2+).

The protein resides in the secreted. It localises to the extracellular space. The protein localises to the golgi apparatus. It is found in the trans-Golgi network. The catalysed reaction is 2 superoxide + 2 H(+) = H2O2 + O2. In terms of biological role, protect the extracellular space from toxic effect of reactive oxygen intermediates by converting superoxide radicals into hydrogen peroxide and oxygen. In Mus musculus (Mouse), this protein is Extracellular superoxide dismutase [Cu-Zn] (Sod3).